A 77-amino-acid polypeptide reads, in one-letter code: UPF0154 protein LCK_00994 (77 aa).

The helical transmembrane segment at 5 to 25 (FGILIFVLGLVIGLVIGFFVA) threads the bilayer. Residues 50–77 (SMGQKPSQKKLNQMMAQMKQQSEQSQKK) are disordered.

It belongs to the UPF0154 family.

It localises to the cell membrane. This chain is UPF0154 protein LCK_00994, found in Leuconostoc citreum (strain KM20).